A 426-amino-acid polypeptide reads, in one-letter code: Histone deacetylase 9 (426 aa).

The interval 6–318 (KISYFYDGDV…WTVETGILLD (313 aa)) is histone deacetylase. The active-site Proton donor/acceptor is the H137. 3 residues coordinate Zn(2+): D172, H174, and D261. The segment at 383–426 (PDFYIPDFDEDEQNPDVRADQRSRDKQIQRDDEYFDGDNDNDAS) is disordered. The span at 397-414 (PDVRADQRSRDKQIQRDD) shows a compositional bias: basic and acidic residues. Residues 415–426 (EYFDGDNDNDAS) show a composition bias toward acidic residues.

The protein belongs to the histone deacetylase family. HD type 1 subfamily. As to quaternary structure, interacts with AHL22. Binds to farnesylated ASG2 in the cytosol. Zn(2+) is required as a cofactor.

Its subcellular location is the nucleus. The protein resides in the cytoplasm. The protein localises to the cytosol. It carries out the reaction N(6)-acetyl-L-lysyl-[histone] + H2O = L-lysyl-[histone] + acetate. Its function is as follows. Responsible for the deacetylation of lysine residues on the N-terminal part of the core histones (H2A, H2B, H3 and H4). Histone deacetylation gives a tag for epigenetic repression and plays an important role in transcriptional regulation, cell cycle progression and developmental events. Histone deacetylases act via the formation of large multiprotein complexes. This Arabidopsis thaliana (Mouse-ear cress) protein is Histone deacetylase 9 (HDA9).